Here is a 564-residue protein sequence, read N- to C-terminus: Dihydroxy-acid dehydratase (564 aa).

C50 contacts [2Fe-2S] cluster. D82 contacts Mg(2+). Position 123 (C123) interacts with [2Fe-2S] cluster. 2 residues coordinate Mg(2+): D124 and K125. An N6-carboxylysine modification is found at K125. C195 contacts [2Fe-2S] cluster. E447 serves as a coordination point for Mg(2+). S473 serves as the catalytic Proton acceptor.

The protein belongs to the IlvD/Edd family. In terms of assembly, homodimer. It depends on [2Fe-2S] cluster as a cofactor. Requires Mg(2+) as cofactor.

The catalysed reaction is (2R)-2,3-dihydroxy-3-methylbutanoate = 3-methyl-2-oxobutanoate + H2O. The enzyme catalyses (2R,3R)-2,3-dihydroxy-3-methylpentanoate = (S)-3-methyl-2-oxopentanoate + H2O. The protein operates within amino-acid biosynthesis; L-isoleucine biosynthesis; L-isoleucine from 2-oxobutanoate: step 3/4. It functions in the pathway amino-acid biosynthesis; L-valine biosynthesis; L-valine from pyruvate: step 3/4. In terms of biological role, functions in the biosynthesis of branched-chain amino acids. Catalyzes the dehydration of (2R,3R)-2,3-dihydroxy-3-methylpentanoate (2,3-dihydroxy-3-methylvalerate) into 2-oxo-3-methylpentanoate (2-oxo-3-methylvalerate) and of (2R)-2,3-dihydroxy-3-methylbutanoate (2,3-dihydroxyisovalerate) into 2-oxo-3-methylbutanoate (2-oxoisovalerate), the penultimate precursor to L-isoleucine and L-valine, respectively. The polypeptide is Dihydroxy-acid dehydratase (Chloroflexus aggregans (strain MD-66 / DSM 9485)).